Here is a 238-residue protein sequence, read N- to C-terminus: Ribosomal RNA small subunit methyltransferase I (238 aa).

It belongs to the methyltransferase superfamily. RsmI family.

The protein localises to the cytoplasm. It carries out the reaction cytidine(1402) in 16S rRNA + S-adenosyl-L-methionine = 2'-O-methylcytidine(1402) in 16S rRNA + S-adenosyl-L-homocysteine + H(+). Its function is as follows. Catalyzes the 2'-O-methylation of the ribose of cytidine 1402 (C1402) in 16S rRNA. This Mesomycoplasma conjunctivae (strain ATCC 25834 / NCTC 10147 / HRC/581) (Mycoplasma conjunctivae) protein is Ribosomal RNA small subunit methyltransferase I.